Here is a 435-residue protein sequence, read N- to C-terminus: UDP-glucuronic acid decarboxylase 1 (435 aa).

Positions 1 to 33 (MKQLHKQMSSKRDEETIPMSQSSPYSPKTLKHP) are disordered. The Cytoplasmic segment spans residues 1-48 (MKQLHKQMSSKRDEETIPMSQSSPYSPKTLKHPRSLPRSLHYLFREQR). The helical; Signal-anchor for type II membrane protein transmembrane segment at 49–69 (LLFILVGILIGSTFFILQPSL) threads the bilayer. The Lumenal portion of the chain corresponds to 70–435 (SRLGAAESTS…ILNEDEGKGL (366 aa)). Residues 91–100 (DSPPSRSTFN) are compositionally biased toward polar residues. Residues 91-110 (DSPPSRSTFNSGGGGGRTGR) form a disordered region. Gly129, Phe130, Val131, Asp150, Asn151, Phe153, Thr154, Gly155, Asp175, and Val176 together coordinate NAD(+). Ile180 serves as a coordination point for UDP-alpha-D-glucuronate. Leu190 is a binding site for NAD(+). Lys208 serves as a coordination point for UDP-alpha-D-glucuronate. Thr209 provides a ligand contact to NAD(+). UDP-alpha-D-glucuronate is bound by residues Asn216, Gly219, Lys222, and Arg223. Residues Tyr262 and Lys266 each contribute to the NAD(+) site. The active-site Proton acceptor is the Tyr262. Residue Tyr276 participates in UDP-alpha-D-glucuronate binding. Thr292 and Arg303 together coordinate NAD(+). The interval 380 to 401 (EFKPNTADDPHKRKPDISKAKE) is disordered. Over residues 385 to 401 (TADDPHKRKPDISKAKE) the composition is skewed to basic and acidic residues.

It belongs to the NAD(P)-dependent epimerase/dehydratase family. UDP-glucuronic acid decarboxylase subfamily. NAD(+) serves as cofactor. As to expression, ubiquitous.

It localises to the golgi apparatus. Its subcellular location is the golgi stack membrane. The catalysed reaction is UDP-alpha-D-glucuronate + H(+) = UDP-alpha-D-xylose + CO2. It participates in nucleotide-sugar biosynthesis; UDP-alpha-D-xylose biosynthesis; UDP-alpha-D-xylose from UDP-alpha-D-glucuronate: step 1/1. In terms of biological role, catalyzes the NAD-dependent decarboxylation of UDP-glucuronic acid to UDP-xylose. Necessary for the biosynthesis of the core tetrasaccharide in glycosaminoglycan biosynthesis. This is UDP-glucuronic acid decarboxylase 1 from Arabidopsis thaliana (Mouse-ear cress).